Here is a 725-residue protein sequence, read N- to C-terminus: Catalase-peroxidase (725 aa).

The segment at residues 90 to 213 (WHSAGTYRTG…LAAVQMGLIY (124 aa)) is a cross-link (tryptophyl-tyrosyl-methioninium (Trp-Tyr) (with M-239)). The active-site Proton acceptor is the His-91. The segment at residues 213 to 239 (YVNPEGPNGNPDPVAAAKDIRETFARM) is a cross-link (tryptophyl-tyrosyl-methioninium (Tyr-Met) (with W-90)). His-254 is a binding site for heme b.

Belongs to the peroxidase family. Peroxidase/catalase subfamily. Homodimer or homotetramer. Requires heme b as cofactor. Post-translationally, formation of the three residue Trp-Tyr-Met cross-link is important for the catalase, but not the peroxidase activity of the enzyme.

The enzyme catalyses H2O2 + AH2 = A + 2 H2O. It catalyses the reaction 2 H2O2 = O2 + 2 H2O. Its function is as follows. Bifunctional enzyme with both catalase and broad-spectrum peroxidase activity. This chain is Catalase-peroxidase, found in Hahella chejuensis (strain KCTC 2396).